The chain runs to 264 residues: Thiazole synthase (264 aa).

K104 functions as the Schiff-base intermediate with DXP in the catalytic mechanism. Residues G165, 191 to 192 (AG), and 213 to 214 (NT) each bind 1-deoxy-D-xylulose 5-phosphate.

Belongs to the ThiG family. In terms of assembly, homotetramer. Forms heterodimers with either ThiH or ThiS.

The protein resides in the cytoplasm. It carries out the reaction [ThiS sulfur-carrier protein]-C-terminal-Gly-aminoethanethioate + 2-iminoacetate + 1-deoxy-D-xylulose 5-phosphate = [ThiS sulfur-carrier protein]-C-terminal Gly-Gly + 2-[(2R,5Z)-2-carboxy-4-methylthiazol-5(2H)-ylidene]ethyl phosphate + 2 H2O + H(+). Its pathway is cofactor biosynthesis; thiamine diphosphate biosynthesis. In terms of biological role, catalyzes the rearrangement of 1-deoxy-D-xylulose 5-phosphate (DXP) to produce the thiazole phosphate moiety of thiamine. Sulfur is provided by the thiocarboxylate moiety of the carrier protein ThiS. In vitro, sulfur can be provided by H(2)S. This chain is Thiazole synthase, found in Oleidesulfovibrio alaskensis (strain ATCC BAA-1058 / DSM 17464 / G20) (Desulfovibrio alaskensis).